A 436-amino-acid polypeptide reads, in one-letter code: Peptidase B (436 aa).

Residues Lys201 and Asp206 each contribute to the Mn(2+) site. Residue Lys213 is part of the active site. Residues Asp224, Asp283, and Glu285 each coordinate Mn(2+). Arg287 is a catalytic residue.

This sequence belongs to the peptidase M17 family. In terms of assembly, homohexamer. Mn(2+) serves as cofactor.

The protein resides in the cytoplasm. The enzyme catalyses Release of an N-terminal amino acid, Xaa, from a peptide or arylamide. Xaa is preferably Glu or Asp but may be other amino acids, including Leu, Met, His, Cys and Gln.. Functionally, probably plays an important role in intracellular peptide degradation. The protein is Peptidase B of Pectobacterium carotovorum subsp. carotovorum (strain PC1).